The following is a 284-amino-acid chain: MKTTMLMLVLLVCSYIHYVCAQIRFVTPATTDSMDFTAISFSWEESNTGIPLEDITNTVFYICSGSMDAPQPCAVLYTSPSPSSISQAGPFAISQVFGPAGRLYFLWAQSTYAGGIVNDYTDFFTVNGLTGTFDNYEIYASLMALGVYPYVPTLTGFSTFLGVWPTGTMRDWYLSQTTGVLRTGPIQNRPDSTFTAATTDIQPLWETSSYSVFTTFAGPPIATSTVFASPTYMYTLYANYASTASKPTIIATPTAGLRRRDSWAQAAPKRGMRLGEHKRGLLYS.

Residues 1-21 (MKTTMLMLVLLVCSYIHYVCA) form the signal peptide. The next 3 membrane-spanning stretches (helical) occupy residues 88–108 (AGPF…FLWA), 144–164 (ALGV…LGVW), and 212–232 (VFTT…SPTY).

It localises to the membrane. This is an uncharacterized protein from Schizosaccharomyces pombe (strain 972 / ATCC 24843) (Fission yeast).